Consider the following 184-residue polypeptide: Regulatory protein RecX (184 aa).

Positions 1 to 21 are disordered; the sequence is MTLFPLPSTSDPAEADESTKR.

The protein belongs to the RecX family.

The protein localises to the cytoplasm. Its function is as follows. Modulates RecA activity. The polypeptide is Regulatory protein RecX (Mycolicibacterium vanbaalenii (strain DSM 7251 / JCM 13017 / BCRC 16820 / KCTC 9966 / NRRL B-24157 / PYR-1) (Mycobacterium vanbaalenii)).